The sequence spans 254 residues: H-2 class II histocompatibility antigen, I-E alpha chain (254 aa).

An N-terminal signal peptide occupies residues 1-24 (RSRALILGVLALTTMLSLCGGEDD). The tract at residues 25 to 109 (IEADHVAFYG…KDSNFTPAAN (85 aa)) is alpha-1. The Extracellular portion of the chain corresponds to 25–216 (IEADHVAFYG…IPAPMSELTE (192 aa)). Residues asparagine 103 and asparagine 143 are each glycosylated (N-linked (GlcNAc...) asparagine). The tract at residues 110–203 (EAPQATVFPK…GLEEPVLKHW (94 aa)) is alpha-2. The region spanning 112-204 (PQATVFPKSP…LEEPVLKHWE (93 aa)) is the Ig-like C1-type domain. The cysteines at positions 132 and 188 are disulfide-linked. The segment at 204 to 216 (EPEIPAPMSELTE) is connecting peptide. A helical transmembrane segment spans residues 217 to 242 (TVVCALGLSVGLVGIVVGTIFIIQGL). At 243–254 (RSGGTSRHPGPL) the chain is on the cytoplasmic side.

This sequence belongs to the MHC class II family.

The protein localises to the membrane. This chain is H-2 class II histocompatibility antigen, I-E alpha chain, found in Mus musculus (Mouse).